The sequence spans 469 residues: Mitochondrial distribution and morphology protein 10 (469 aa).

This sequence belongs to the MDM10 family. As to quaternary structure, component of the ER-mitochondria encounter structure (ERMES) or MDM complex, composed of MMM1, MDM10, MDM12 and MDM34. Associates with the mitochondrial outer membrane sorting assembly machinery SAM(core) complex.

The protein resides in the mitochondrion outer membrane. Functionally, component of the ERMES/MDM complex, which serves as a molecular tether to connect the endoplasmic reticulum and mitochondria. Components of this complex are involved in the control of mitochondrial shape and protein biogenesis and may function in phospholipid exchange. MDM10 is involved in the late assembly steps of the general translocase of the mitochondrial outer membrane (TOM complex). Functions in the TOM40-specific route of the assembly of outer membrane beta-barrel proteins, including the association of TOM40 with the receptor TOM22 and small TOM proteins. Can associate with the SAM(core) complex as well as the MDM12-MMM1 complex, both involved in late steps of the major beta-barrel assembly pathway, that is responsible for biogenesis of all outer membrane beta-barrel proteins. May act as a switch that shuttles between both complexes and channels precursor proteins into the TOM40-specific pathway. Plays a role in mitochondrial morphology and in the inheritance of mitochondria. The chain is Mitochondrial distribution and morphology protein 10 from Scheffersomyces stipitis (strain ATCC 58785 / CBS 6054 / NBRC 10063 / NRRL Y-11545) (Yeast).